The following is a 388-amino-acid chain: Alanine racemase (388 aa).

The active-site Proton acceptor; specific for D-alanine is lysine 44. At lysine 44 the chain carries N6-(pyridoxal phosphate)lysine. Position 142 (arginine 142) interacts with substrate. Tyrosine 273 acts as the Proton acceptor; specific for L-alanine in catalysis. Methionine 321 lines the substrate pocket.

It belongs to the alanine racemase family. It depends on pyridoxal 5'-phosphate as a cofactor.

The enzyme catalyses L-alanine = D-alanine. It functions in the pathway amino-acid biosynthesis; D-alanine biosynthesis; D-alanine from L-alanine: step 1/1. Functionally, catalyzes the interconversion of L-alanine and D-alanine. May also act on other amino acids. In Mycobacterium ulcerans (strain Agy99), this protein is Alanine racemase (alr).